A 538-amino-acid polypeptide reads, in one-letter code: Atos homolog protein B (538 aa).

Disordered regions lie at residues 1 to 99, 165 to 185, and 199 to 270; these read MRHV…PSTV, QGGQ…QLHT, and KSPV…GTLG. Positions 227–238 are enriched in pro residues; that stretch reads HTPPGPGPPGPC. Residues serine 254 and serine 255 each carry the phosphoserine modification. The required for macropage invasion stretch occupies residues 348–430; that stretch reads LLGNFEESLL…VPKVGTIQVT (83 aa). Residues 436-444 are transactivation domain 1 (TAD1); it reads QTVVKMFLV.

This sequence belongs to the ATOS family.

The protein localises to the nucleus. Transcription regulator that syncronizes transcriptional and translational programs to promote macrophage invasion of tissues. In Mus musculus (Mouse), this protein is Atos homolog protein B.